Reading from the N-terminus, the 273-residue chain is NH(3)-dependent NAD(+) synthetase (273 aa).

Residue 47-54 coordinates ATP; the sequence is GISGGQDS. Asp53 is a Mg(2+) binding site. Deamido-NAD(+) is bound at residue Arg139. ATP is bound at residue Thr159. Mg(2+) is bound at residue Glu164. Residues Lys172 and Asp179 each coordinate deamido-NAD(+). ATP is bound by residues Lys188 and Thr210. A deamido-NAD(+)-binding site is contributed by 259–260; sequence HK.

This sequence belongs to the NAD synthetase family. Homodimer.

It carries out the reaction deamido-NAD(+) + NH4(+) + ATP = AMP + diphosphate + NAD(+) + H(+). It functions in the pathway cofactor biosynthesis; NAD(+) biosynthesis; NAD(+) from deamido-NAD(+) (ammonia route): step 1/1. Its function is as follows. Catalyzes the ATP-dependent amidation of deamido-NAD to form NAD. Uses ammonia as a nitrogen source. In Staphylococcus saprophyticus subsp. saprophyticus (strain ATCC 15305 / DSM 20229 / NCIMB 8711 / NCTC 7292 / S-41), this protein is NH(3)-dependent NAD(+) synthetase.